Consider the following 424-residue polypeptide: Glutamyl-tRNA(Gln) amidotransferase subunit D (424 aa).

The disordered stretch occupies residues 56–78; the sequence is GETANGSRNGGKGCKTNEEELPE. The region spanning 84–413 is the Asparaginase/glutaminase domain; it reads PKIAILSTGG…EKAAGMLRED (330 aa). Active-site residues include threonine 94, threonine 170, aspartate 171, and lysine 247.

Belongs to the asparaginase 1 family. GatD subfamily. In terms of assembly, heterodimer of GatD and GatE.

It catalyses the reaction L-glutamyl-tRNA(Gln) + L-glutamine + ATP + H2O = L-glutaminyl-tRNA(Gln) + L-glutamate + ADP + phosphate + H(+). Allows the formation of correctly charged Gln-tRNA(Gln) through the transamidation of misacylated Glu-tRNA(Gln) in organisms which lack glutaminyl-tRNA synthetase. The reaction takes place in the presence of glutamine and ATP through an activated gamma-phospho-Glu-tRNA(Gln). The GatDE system is specific for glutamate and does not act on aspartate. The chain is Glutamyl-tRNA(Gln) amidotransferase subunit D from Methanosarcina acetivorans (strain ATCC 35395 / DSM 2834 / JCM 12185 / C2A).